A 57-amino-acid chain; its full sequence is Protein YnaL (57 aa).

Residues leucine 7 to cysteine 57 form a disordered region. Over residues valine 11–proline 35 the composition is skewed to pro residues. Residues histidine 46–cysteine 57 are compositionally biased toward basic residues.

This is Protein YnaL from Escherichia coli (strain K12).